Here is a 1211-residue protein sequence, read N- to C-terminus: Transient receptor potential cation channel subfamily A member 1 homolog (1211 aa).

At 1–811 the chain is on the cytoplasmic side; the sequence is MSKKSLGLDV…LKYKWNRLGR (811 aa). ANK repeat units follow at residues 49–79, 83–112, 116–169, 173–202, 206–235, 239–270, 277–306, 311–340, 344–374, 378–407, 411–440, 473–502, 506–535, 540–569, 573–602, 605–634, and 638–669; these read NLRS…AVNA, DFMT…LPNT, EGDT…EIDP, YQLT…DVDA, NKMT…NVTK, RLNT…AIKA, EKKT…KNSC, REKE…NKNE, VKAV…NIDV, QGLT…NLTI, DERT…KKNK, DQNT…SITQ, DEET…RLLL, MGNS…DKEA, YQKT…QIES, DTKT…TIDR, and EGKT…NLMI. The helical transmembrane segment at 812–832 threads the bilayer; sequence PMYYFALFMYLVFIVSLTQYV. The Extracellular segment spans residues 833 to 870; it reads RHTKAPYNVWNEESYYDSEYFDENETCPQINTTKPDVV. Residues Asn-856 and Asn-863 are each glycosylated (N-linked (GlcNAc...) asparagine). Residues 871-891 form a helical membrane-spanning segment; it reads WKIIIQTLAVCQILVECFQLF. The Cytoplasmic portion of the chain corresponds to 892–894; the sequence is QRK. A helical transmembrane segment spans residues 895–915; sequence FAYLVNWENWIDCFIYSTALI. Over 916 to 932 the chain is Extracellular; that stretch reads TVYDFSECSATSGVRQN. A helical membrane pass occupies residues 933-953; sequence WQWILAALCIFFGWINLLFMI. At 954-975 the chain is on the cytoplasmic side; that stretch reads RKMPRFGIFVVMFVDIVKTFFR. The helical transmembrane segment at 976–996 threads the bilayer; that stretch reads FFPVFVLFIIAFSSSFYVILQ. Residues 997-1004 lie on the Extracellular side of the membrane; sequence NRPEFSTI. The pore-forming intramembrane region spans 1005–1025; it reads FMSPLKTTVMMIGEFEFTGIF. The Extracellular portion of the chain corresponds to 1026-1048; that stretch reads HGDETTHAEKMFGPAHTAVACAL. A helical membrane pass occupies residues 1049-1069; sequence FFFFCIIMTILLMNLLVGLAV. The Cytoplasmic portion of the chain corresponds to 1070–1193; it reads DDIKGVQEKA…EKQVRLEAII (124 aa). Positions 1149-1191 form a coiled coil; that stretch reads EMYEREAEFTSEMTQKLQNQAAKLKNIQENIDVMYEKQVRLEA.

This sequence belongs to the transient receptor (TC 1.A.4) family. As to quaternary structure, homotetramer. In terms of tissue distribution, expressed in many sensory neurons, including OLQ and IL1 neurons.

The protein localises to the cell membrane. Receptor-activated non-selective cation channel involved in the nose-touch response and foraging behavior. Contributes to the neural responses of sensory neurons to touch, particularly after repeated mechanical stimulation. Has no apparent role in thermosensory or chemosensory behaviors. This Caenorhabditis elegans protein is Transient receptor potential cation channel subfamily A member 1 homolog (trpa-1).